The sequence spans 600 residues: ATP-dependent lipid A-core flippase (600 aa).

A run of 4 helical transmembrane segments spans residues 26–46 (VGIFLLSILGFVIFASTQPML), 82–102 (LLIVLIAAWQGLGSFLGNYFL), 167–187 (VFLFIYLLMMNWKLTLVMLAI), and 266–286 (PMLQLVIYSAMAVLMFLVLFL). The ABC transmembrane type-1 domain occupies 30–321 (LLSILGFVIF…LSEVSSTIQK (292 aa)). The ABC transporter domain maps to 353–589 (LEVKNLSFFY…NGYYARLHAM (237 aa)). 387 to 394 (GRSGSGKS) provides a ligand contact to ATP.

It belongs to the ABC transporter superfamily. Lipid exporter (TC 3.A.1.106) family. As to quaternary structure, homodimer.

Its subcellular location is the cell inner membrane. It catalyses the reaction ATP + H2O + lipid A-core oligosaccharideSide 1 = ADP + phosphate + lipid A-core oligosaccharideSide 2.. Functionally, involved in lipopolysaccharide (LPS) biosynthesis. Translocates lipid A-core from the inner to the outer leaflet of the inner membrane. Transmembrane domains (TMD) form a pore in the inner membrane and the ATP-binding domain (NBD) is responsible for energy generation. This chain is ATP-dependent lipid A-core flippase, found in Pseudomonas syringae pv. tomato (strain ATCC BAA-871 / DC3000).